The chain runs to 228 residues: MKVAYHGHSVVTVDTGDHQLIFDPFITGNSLTDLKPEDVKADVILLTHGHNDHVGDTIEIAKRNNSLVVAPNELAVYLGWKGLNVHPMHIGGSHQFDFGKVKLTQAFHGSAYTEEDSQKIVYTGMPAGILLTVEGRTIFHAGDTGLFSDMKLIGELNHIDLAFLPIGDNFTMGPEDAKLAAEWLRAKQVVPVHYSTFPVIEQDPHAFADSLPGGVGKVLEVGESIEFK.

This sequence belongs to the UPF0173 family.

The sequence is that of UPF0173 metal-dependent hydrolase BLi03080/BL00413 from Bacillus licheniformis (strain ATCC 14580 / DSM 13 / JCM 2505 / CCUG 7422 / NBRC 12200 / NCIMB 9375 / NCTC 10341 / NRRL NRS-1264 / Gibson 46).